We begin with the raw amino-acid sequence, 172 residues long: MIDSDGFRANVGIIICNQYGQVMWARRFGQHSWQFPQGGLDDGESAEEAMYRELYEEVGLRPEQVKILTSTRSWLRYRLPKRLVRQDSKPVCIGQKQKWFLLQLNGNDNNINLNSSGHPEFDDWRWVNYWYPVRQVVSFKRDVYRKVMKEFAPTTLAFQVNDTGRKRNRPRN.

The Nudix hydrolase domain occupies 6–149 (GFRANVGIII…KRDVYRKVMK (144 aa)). The Nudix box motif lies at 38-59 (GGLDDGESAEEAMYRELYEEVG).

The protein belongs to the Nudix hydrolase family. RppH subfamily. A divalent metal cation serves as cofactor.

In terms of biological role, accelerates the degradation of transcripts by removing pyrophosphate from the 5'-end of triphosphorylated RNA, leading to a more labile monophosphorylated state that can stimulate subsequent ribonuclease cleavage. This chain is RNA pyrophosphohydrolase, found in Shewanella denitrificans (strain OS217 / ATCC BAA-1090 / DSM 15013).